The primary structure comprises 208 residues: Small ribosomal subunit protein uS4 (208 aa).

The S4 RNA-binding domain occupies 98–160; the sequence is SRLDNVAYNM…AKSYLRIKSS (63 aa).

Belongs to the universal ribosomal protein uS4 family. Part of the 30S ribosomal subunit. Contacts protein S5. The interaction surface between S4 and S5 is involved in control of translational fidelity.

Functionally, one of the primary rRNA binding proteins, it binds directly to 16S rRNA where it nucleates assembly of the body of the 30S subunit. In terms of biological role, with S5 and S12 plays an important role in translational accuracy. This Nitrosomonas eutropha (strain DSM 101675 / C91 / Nm57) protein is Small ribosomal subunit protein uS4.